A 421-amino-acid chain; its full sequence is Galactooligosaccharide-binding protein (421 aa).

An N-terminal signal peptide occupies residues 1 to 22 (MKMAKKCSVFMLCAAVSLSLAA). C23 carries the N-palmitoyl cysteine lipid modification. C23 is lipidated: S-diacylglycerol cysteine. The interval 393 to 421 (ATGKADPKQALDQAAETAKGQIKAKHSGK) is disordered.

It belongs to the bacterial solute-binding protein 1 family. The complex is composed of two ATP-binding proteins (MsmX), two transmembrane proteins (GanP and GanQ) and a solute-binding protein (GanS).

It localises to the cell membrane. In terms of biological role, involved in galactan degradation. Part of the ABC transporter complex GanPQS involved in the uptake of galactooligosaccharides. Binds mainly galactotetraose and galactotriose. The protein is Galactooligosaccharide-binding protein of Bacillus subtilis (strain 168).